The sequence spans 235 residues: Small ribosomal subunit protein uS5 (235 aa).

Positions Glu60 to Ile123 constitute an S5 DRBM domain. Cys127, Cys132, Cys134, and His138 together coordinate Zn(2+).

The protein belongs to the universal ribosomal protein uS5 family. As to quaternary structure, part of the 30S ribosomal subunit. Contacts protein S4. The cofactor is Zn(2+).

Its function is as follows. With S4 and S12 plays an important role in translational accuracy. This is Small ribosomal subunit protein uS5 from Thermococcus kodakarensis (strain ATCC BAA-918 / JCM 12380 / KOD1) (Pyrococcus kodakaraensis (strain KOD1)).